The following is a 345-amino-acid chain: 2-oxoglutarate and iron-dependent oxygenase domain-containing protein 2 (345 aa).

Residues 207–301 form the Fe2OG dioxygenase domain; that stretch reads DSHKAFVVKY…RWNLIIWMRA (95 aa). Residues His227, Asp229, and His282 each coordinate Fe cation. Residue Arg292 coordinates 2-oxoglutarate.

The protein belongs to the OGFOD2 family. The cofactor is Fe(2+). L-ascorbate serves as cofactor.

The protein is 2-oxoglutarate and iron-dependent oxygenase domain-containing protein 2 (ogfod2) of Danio rerio (Zebrafish).